The following is a 514-amino-acid chain: ATP synthase subunit alpha (514 aa).

Position 170-177 (170-177) interacts with ATP; sequence GDRQIGKT.

It belongs to the ATPase alpha/beta chains family. F-type ATPases have 2 components, CF(1) - the catalytic core - and CF(0) - the membrane proton channel. CF(1) has five subunits: alpha(3), beta(3), gamma(1), delta(1), epsilon(1). CF(0) has three main subunits: a(1), b(2) and c(9-12). The alpha and beta chains form an alternating ring which encloses part of the gamma chain. CF(1) is attached to CF(0) by a central stalk formed by the gamma and epsilon chains, while a peripheral stalk is formed by the delta and b chains.

It localises to the cell inner membrane. It catalyses the reaction ATP + H2O + 4 H(+)(in) = ADP + phosphate + 5 H(+)(out). In terms of biological role, produces ATP from ADP in the presence of a proton gradient across the membrane. The alpha chain is a regulatory subunit. This chain is ATP synthase subunit alpha, found in Pseudomonas putida (strain W619).